Consider the following 437-residue polypeptide: Adenylosuccinate synthetase (437 aa).

Residues 12–18 (GDEGKGK) and 40–42 (GHT) contribute to the GTP site. D13 functions as the Proton acceptor in the catalytic mechanism. 2 residues coordinate Mg(2+): D13 and G40. IMP-binding positions include 13–16 (DEGK), 38–41 (NAGH), T128, R142, Q223, T238, and R302. The active-site Proton donor is H41. Substrate is bound at residue 298–304 (TTTGRRR). Residues R304, 330–332 (KLD), and 412–414 (SLG) each bind GTP.

Belongs to the adenylosuccinate synthetase family. Homodimer. The cofactor is Mg(2+).

The protein localises to the cytoplasm. The enzyme catalyses IMP + L-aspartate + GTP = N(6)-(1,2-dicarboxyethyl)-AMP + GDP + phosphate + 2 H(+). Its pathway is purine metabolism; AMP biosynthesis via de novo pathway; AMP from IMP: step 1/2. Its function is as follows. Plays an important role in the de novo pathway of purine nucleotide biosynthesis. Catalyzes the first committed step in the biosynthesis of AMP from IMP. This is Adenylosuccinate synthetase from Prochlorococcus marinus (strain NATL1A).